A 190-amino-acid chain; its full sequence is Protein PLANT CADMIUM RESISTANCE 10 (190 aa).

The next 2 membrane-spanning stretches (helical) occupy residues 78 to 98 (LLGS…WALV) and 108 to 125 (GALL…ACGY).

The protein belongs to the cornifelin family.

It localises to the membrane. In terms of biological role, may be involved in cadmium resistance. This is Protein PLANT CADMIUM RESISTANCE 10 (PCR10) from Arabidopsis thaliana (Mouse-ear cress).